Here is a 238-residue protein sequence, read N- to C-terminus: Ribonuclease PH (238 aa).

Phosphate is bound by residues Arg86 and 124 to 126 (GTR).

It belongs to the RNase PH family. In terms of assembly, homohexameric ring arranged as a trimer of dimers.

It catalyses the reaction tRNA(n+1) + phosphate = tRNA(n) + a ribonucleoside 5'-diphosphate. In terms of biological role, phosphorolytic 3'-5' exoribonuclease that plays an important role in tRNA 3'-end maturation. Removes nucleotide residues following the 3'-CCA terminus of tRNAs; can also add nucleotides to the ends of RNA molecules by using nucleoside diphosphates as substrates, but this may not be physiologically important. Probably plays a role in initiation of 16S rRNA degradation (leading to ribosome degradation) during starvation. The sequence is that of Ribonuclease PH from Agrobacterium fabrum (strain C58 / ATCC 33970) (Agrobacterium tumefaciens (strain C58)).